A 305-amino-acid chain; its full sequence is MYNGILPVYKERGLTSHDVVFKLRKILKTKKIGHTGTLDPEVAGVLPVCIGNATRVSDYVMDMGKAYEATVSIGRSTTTEDQTGDTLEKKGVHSADFNKDDIDRLLESFKGIIEQIPPMYSSVKVNGKKLYEYARNNETVERPKRKVNIKDIGRISELDFKENECHFKIRVICGKGTYIRTLATDIGVKLGFPAHMSKLTRIESGGFVLKDSLTLEQIKELHEQDSLQNKLFPLEYGLKGLPSIKIKDSHIKKRILNGQKFNKNEFDNKIKDQIVFIDDDSEKVLAIYMVHPTKESEIKPKKVFN.

The active-site Nucleophile is the D39.

The protein belongs to the pseudouridine synthase TruB family. Type 1 subfamily.

The enzyme catalyses uridine(55) in tRNA = pseudouridine(55) in tRNA. Its function is as follows. Responsible for synthesis of pseudouridine from uracil-55 in the psi GC loop of transfer RNAs. The polypeptide is tRNA pseudouridine synthase B (Staphylococcus aureus (strain MSSA476)).